The chain runs to 376 residues: Succinyl-diaminopimelate desuccinylase (376 aa).

His-67 serves as a coordination point for Zn(2+). Asp-69 is an active-site residue. A Zn(2+)-binding site is contributed by Asp-100. Glu-134 acts as the Proton acceptor in catalysis. The Zn(2+) site is built by Glu-135, Glu-163, and His-349.

This sequence belongs to the peptidase M20A family. DapE subfamily. Homodimer. Requires Zn(2+) as cofactor. Co(2+) serves as cofactor.

The catalysed reaction is N-succinyl-(2S,6S)-2,6-diaminopimelate + H2O = (2S,6S)-2,6-diaminopimelate + succinate. It participates in amino-acid biosynthesis; L-lysine biosynthesis via DAP pathway; LL-2,6-diaminopimelate from (S)-tetrahydrodipicolinate (succinylase route): step 3/3. Functionally, catalyzes the hydrolysis of N-succinyl-L,L-diaminopimelic acid (SDAP), forming succinate and LL-2,6-diaminopimelate (DAP), an intermediate involved in the bacterial biosynthesis of lysine and meso-diaminopimelic acid, an essential component of bacterial cell walls. The polypeptide is Succinyl-diaminopimelate desuccinylase (Actinobacillus succinogenes (strain ATCC 55618 / DSM 22257 / CCUG 43843 / 130Z)).